The primary structure comprises 314 residues: ATP synthase gamma chain (314 aa).

The protein belongs to the ATPase gamma chain family. As to quaternary structure, F-type ATPases have 2 components, CF(1) - the catalytic core - and CF(0) - the membrane proton channel. CF(1) has five subunits: alpha(3), beta(3), gamma(1), delta(1), epsilon(1). CF(0) has three main subunits: a, b and c.

The protein resides in the cellular thylakoid membrane. Functionally, produces ATP from ADP in the presence of a proton gradient across the membrane. The gamma chain is believed to be important in regulating ATPase activity and the flow of protons through the CF(0) complex. The chain is ATP synthase gamma chain from Synechocystis sp. (strain ATCC 27184 / PCC 6803 / Kazusa).